Consider the following 259-residue polypeptide: Dihydroorotate dehydrogenase B (NAD(+)), electron transfer subunit (259 aa).

The region spanning 2–102 is the FAD-binding FR-type domain; sequence MQKQNMIVVN…LGPLGHGFPL (101 aa). Residues 53–56, 70–72, and 77–78 contribute to the FAD site; these read RPIS, LYR, and GT. The [2Fe-2S] cluster site is built by Cys221, Cys226, Cys229, and Cys246.

This sequence belongs to the PyrK family. As to quaternary structure, heterotetramer of 2 PyrK and 2 PyrD type B subunits. [2Fe-2S] cluster is required as a cofactor. It depends on FAD as a cofactor.

It functions in the pathway pyrimidine metabolism; UMP biosynthesis via de novo pathway; orotate from (S)-dihydroorotate (NAD(+) route): step 1/1. In terms of biological role, responsible for channeling the electrons from the oxidation of dihydroorotate from the FMN redox center in the PyrD type B subunit to the ultimate electron acceptor NAD(+). The protein is Dihydroorotate dehydrogenase B (NAD(+)), electron transfer subunit of Bacillus cereus (strain B4264).